A 155-amino-acid polypeptide reads, in one-letter code: Ribonuclease H (155 aa).

The region spanning 4–145 (ETKVIEIYTD…ADALARKAIT (142 aa)) is the RNase H type-1 domain. Residues D13, E51, D73, and D137 each coordinate Mg(2+).

It belongs to the RNase H family. As to quaternary structure, monomer. The cofactor is Mg(2+).

It localises to the cytoplasm. It carries out the reaction Endonucleolytic cleavage to 5'-phosphomonoester.. In terms of biological role, endonuclease that specifically degrades the RNA of RNA-DNA hybrids. In Bartonella bacilliformis (strain ATCC 35685 / KC583 / Herrer 020/F12,63), this protein is Ribonuclease H.